We begin with the raw amino-acid sequence, 362 residues long: MDNFLNDSKLMEDCKSRQWLLSGESPAISSVMFSAGVLGNLIALALLARRWRGDTGCSAGSRTSISLFHVLVTELVLTDLLGTCLISPVVLASYSRNQTLVALAPESHACTYFAFTMTFFSLATMLMLFAMALERYLSIGYPYFYRRHLSRRGGLAVLPVIYGASLLFCSLPLLNYGEYVQYCPGTWCFIRHGRTAYLQLYATMLLLLIVAVLACNISVILNLIRMHRRSRRSRCGLSGSSLRGPGSRRRGERTSMAEETDHLILLAIMTITFAICSLPFTIFAYMDETSSLKEKWDLRALRFLSVNSIIDPWVFAILRPPVLRLMRSVLCCRTSLRTQEAQQTSCSTQSSASKQTDLCGQL.

Residues 1–24 are Extracellular-facing; the sequence is MDNFLNDSKLMEDCKSRQWLLSGE. Residue Asn-6 is glycosylated (N-linked (GlcNAc...) asparagine). The helical transmembrane segment at 25-48 threads the bilayer; the sequence is SPAISSVMFSAGVLGNLIALALLA. At 49-66 the chain is on the cytoplasmic side; it reads RRWRGDTGCSAGSRTSIS. A helical transmembrane segment spans residues 67 to 92; that stretch reads LFHVLVTELVLTDLLGTCLISPVVLA. Residues 93 to 112 lie on the Extracellular side of the membrane; the sequence is SYSRNQTLVALAPESHACTY. A disulfide bridge connects residues Cys-110 and Cys-188. A helical transmembrane segment spans residues 113–133; that stretch reads FAFTMTFFSLATMLMLFAMAL. Residues 134 to 152 are Cytoplasmic-facing; the sequence is ERYLSIGYPYFYRRHLSRR. Residues 153–177 form a helical membrane-spanning segment; the sequence is GGLAVLPVIYGASLLFCSLPLLNYG. Residues 178–199 lie on the Extracellular side of the membrane; the sequence is EYVQYCPGTWCFIRHGRTAYLQ. A helical transmembrane segment spans residues 200–224; it reads LYATMLLLLIVAVLACNISVILNLI. Residues 225-262 are Cytoplasmic-facing; sequence RMHRRSRRSRCGLSGSSLRGPGSRRRGERTSMAEETDH. Residues 234–255 are disordered; it reads RCGLSGSSLRGPGSRRRGERTS. Residues 235-245 are compositionally biased toward low complexity; that stretch reads CGLSGSSLRGP. Residues 263-286 form a helical membrane-spanning segment; that stretch reads LILLAIMTITFAICSLPFTIFAYM. Over 287–299 the chain is Extracellular; the sequence is DETSSLKEKWDLR. The chain crosses the membrane as a helical span at residues 300 to 323; that stretch reads ALRFLSVNSIIDPWVFAILRPPVL. Topologically, residues 324–362 are cytoplasmic; sequence RLMRSVLCCRTSLRTQEAQQTSCSTQSSASKQTDLCGQL.

The protein belongs to the G-protein coupled receptor 1 family.

It is found in the cell membrane. Its function is as follows. Receptor for prostaglandin E2 (PGE2). The activity of this receptor is mediated by G(s) proteins that stimulate adenylate cyclase. The subsequent raise in intracellular cAMP is responsible for the relaxing effect of this receptor on smooth muscle. The protein is Prostaglandin E2 receptor EP2 subtype (Ptger2) of Mus musculus (Mouse).